The sequence spans 553 residues: Glycine betaine/proline/choline transporter VP1723 (553 aa).

12 consecutive transmembrane segments (helical) span residues 43–63, 85–105, 122–142, 191–211, 231–251, 278–298, 310–330, 362–382, 393–413, 443–463, 490–510, and 515–535; these read NRVF…TLTF, FFLA…VTPL, AGWL…FFGV, WALH…IFSF, VWGW…VFGL, TQVV…VAGL, MILA…MAIL, WTAF…MFIA, FIIC…TAFG, VMPF…VFFI, VFWC…GGLA, and MAVT…VSLI.

The protein belongs to the BCCT transporter (TC 2.A.15) family.

The protein localises to the cell inner membrane. Functionally, involved in the uptake of osmoprotectants. Can transport glycine betaine, proline and choline. In Vibrio parahaemolyticus serotype O3:K6 (strain RIMD 2210633), this protein is Glycine betaine/proline/choline transporter VP1723.